A 118-amino-acid chain; its full sequence is Late cornified envelope protein 1C (118 aa).

Positions Met-1 to Cys-10 are enriched in low complexity. Disordered stretches follow at residues Met-1 to Lys-23 and Cys-87 to Cys-118. Residues Gln-11–Lys-23 are compositionally biased toward pro residues. A compositionally biased stretch (low complexity) spans Pro-90–Ser-103. The segment covering Ser-104–Cys-118 has biased composition (gly residues).

This sequence belongs to the LCE family. In terms of assembly, interacts with CYSRT1. As to expression, skin-specific. Expression was readily detected in adult trunk skin, adult arm skin, fetal skin, penal skin, vulva, esophagus and tongue. Not expressed in the cervix, rectum, lung, colon, or placenta.

Functionally, precursors of the cornified envelope of the stratum corneum. The sequence is that of Late cornified envelope protein 1C (LCE1C) from Homo sapiens (Human).